Reading from the N-terminus, the 440-residue chain is D-serine dehydratase (440 aa).

The residue at position 116 (lysine 116) is an N6-(pyridoxal phosphate)lysine.

This sequence belongs to the serine/threonine dehydratase family. DsdA subfamily. Monomer. Pyridoxal 5'-phosphate is required as a cofactor.

It catalyses the reaction D-serine = pyruvate + NH4(+). The chain is D-serine dehydratase from Salmonella dublin (strain CT_02021853).